Consider the following 734-residue polypeptide: MWKTWLQGGARVIFDDYKPYLRLDPQNGDLLLNEQLDREALCDLTEPCILHFQVLFENPLQFFRAELLVKDINDHTPTFLNNHMLLKISEGATLGTLFQIDSAQDLDVGKNGVQNYTISPNPHFHLKLRDSDEGRKYPELVLDQSLDREKVSEFSLTLTAVDGGSPPRSGTTLINVVVLDISDNAPEFEKPVYEVLVPESSPLDSLIIKASATDLDAGINGELSYSFSHVSRDVRKTFEIHPISGEVYLKAPLDFEIIQSYIINIQAIEGGSLSGKSSILVRVVDVNDNPPEIAMTSLTSPIPENSSPEMVVAVFSIRDQDAGDNGRTVCSIQDNLPFVLKPTFKNFYALVTEHPLDREVRNEYNITITVTDLGTPRLKTEHNITVLVSDVNDNAPIFTQTSYTLFVRENNSPALHIGSVSATDRDSGTNAQVTYSLLPPQDPHLPLTSLVSINADNGHLFALRSLDYEALQEFGFRVGAADHGSPALSSEVLVRVLVLDANDNSPFVLYPLQNGSAPCTELVPRAAEPGYLVTKVVAVDGDSGQNAWLSYQLLKATEPGLFGVWAHNGEGRTARLLSERDAAKHRLVVLVKDNGEPPRSATATLHVLLVEGFSQPYLPLTEAAPSQAQADSLTVYLVVALASVSSLFLFSVFLFVAVRLCRRSRAASMGRCSVPECPFPGHLVDVSGTGTLSQSYQYEVCLTGGSGANEFKFLKPVIPNLLSRDSEMEKAPPF.

Cadherin domains are found at residues 1 to 79 (MWKT…TPTF), 80 to 188 (LNNH…APEF), 189 to 293 (EKPV…PPEI), 294 to 398 (AMTS…APIF), and 399 to 508 (TQTS…SPFV). Residue Asn115 is glycosylated (N-linked (GlcNAc...) asparagine). 2 N-linked (GlcNAc...) asparagine glycosylation sites follow: Asn365 and Asn383. N-linked (GlcNAc...) asparagine glycosylation occurs at Asn514. The Cadherin 6 domain occupies 515–621 (GSAPCTELVP…GFSQPYLPLT (107 aa)). A helical membrane pass occupies residues 638–658 (VVALASVSSLFLFSVFLFVAV).

Its subcellular location is the cell membrane. Functionally, potential calcium-dependent cell-adhesion protein. The chain is Putative protocadherin beta-18 (PCDHB18P) from Homo sapiens (Human).